The sequence spans 119 residues: Circadian clock oscillator protein KaiB (119 aa).

This sequence belongs to the KaiB family. In terms of assembly, may undergo a major conformational rearrangment; in the free state forms homooligomers. When bound to KaiC switches to a monomeric thioredoxin-fold (KaiB(fs)). The active oscillator complex is probably KaiC(6):KaiB(6).

In terms of biological role, component of the KaiBC clock protein complex, which constitutes the main circadian regulator in cyanobacteria; it may modify the ATPase activity of KaiC. Its function is as follows. May be a metamorphic protein which reversibly switches between an inactive tetrameric fold and a rare, thioredoxin-like monomeric fold (KaiB(fs)). KaiB(fs) binds phospho-KaiC, and perhaps clock output effectors. This Prochlorococcus marinus (strain MIT 9303) protein is Circadian clock oscillator protein KaiB.